The chain runs to 290 residues: Acetyl-coenzyme A carboxylase carboxyl transferase subunit beta (290 aa).

One can recognise a CoA carboxyltransferase N-terminal domain in the interval 27 to 290 (LWVKCPSCEA…LQRQPADALA (264 aa)). Zn(2+)-binding residues include Cys-31, Cys-34, Cys-50, and Cys-53. A C4-type zinc finger spans residues 31-53 (CPSCEAVLYRNDVDANLHVCPKC).

This sequence belongs to the AccD/PCCB family. As to quaternary structure, acetyl-CoA carboxylase is a heterohexamer composed of biotin carboxyl carrier protein (AccB), biotin carboxylase (AccC) and two subunits each of ACCase subunit alpha (AccA) and ACCase subunit beta (AccD). Zn(2+) is required as a cofactor.

The protein localises to the cytoplasm. The enzyme catalyses N(6)-carboxybiotinyl-L-lysyl-[protein] + acetyl-CoA = N(6)-biotinyl-L-lysyl-[protein] + malonyl-CoA. The protein operates within lipid metabolism; malonyl-CoA biosynthesis; malonyl-CoA from acetyl-CoA: step 1/1. Its function is as follows. Component of the acetyl coenzyme A carboxylase (ACC) complex. Biotin carboxylase (BC) catalyzes the carboxylation of biotin on its carrier protein (BCCP) and then the CO(2) group is transferred by the transcarboxylase to acetyl-CoA to form malonyl-CoA. This chain is Acetyl-coenzyme A carboxylase carboxyl transferase subunit beta, found in Burkholderia multivorans (strain ATCC 17616 / 249).